Consider the following 374-residue polypeptide: Chaperone protein DnaJ (374 aa).

The region spanning 5-69 (NYYQILGVSK…QKRAAYDRLG (65 aa)) is the J domain. A CR-type zinc finger spans residues 137-215 (GIEKNISFSS…CHGMGRYHKQ (79 aa)). The Zn(2+) site is built by Cys-150, Cys-153, Cys-167, Cys-170, Cys-189, Cys-192, Cys-203, and Cys-206. CXXCXGXG motif repeat units lie at residues 150–157 (CDTCHGSG), 167–174 (CDACSGVG), 189–196 (CHKCQGNG), and 203–210 (CKKCHGMG).

This sequence belongs to the DnaJ family. Homodimer. Zn(2+) serves as cofactor.

Its subcellular location is the cytoplasm. In terms of biological role, participates actively in the response to hyperosmotic and heat shock by preventing the aggregation of stress-denatured proteins and by disaggregating proteins, also in an autonomous, DnaK-independent fashion. Unfolded proteins bind initially to DnaJ; upon interaction with the DnaJ-bound protein, DnaK hydrolyzes its bound ATP, resulting in the formation of a stable complex. GrpE releases ADP from DnaK; ATP binding to DnaK triggers the release of the substrate protein, thus completing the reaction cycle. Several rounds of ATP-dependent interactions between DnaJ, DnaK and GrpE are required for fully efficient folding. Also involved, together with DnaK and GrpE, in the DNA replication of plasmids through activation of initiation proteins. The chain is Chaperone protein DnaJ from Rickettsia massiliae (strain Mtu5).